Here is a 701-residue protein sequence, read N- to C-terminus: Elongation factor G (701 aa).

The 280-residue stretch at 6 to 285 folds into the tr-type G domain; the sequence is HKVRNIGIMA…AVVAYLPNPL (280 aa). GTP contacts are provided by residues 15 to 22, 79 to 83, and 133 to 136; these read AHIDAGKT, DNPGH, and NKMD.

The protein belongs to the TRAFAC class translation factor GTPase superfamily. Classic translation factor GTPase family. EF-G/EF-2 subfamily.

Its subcellular location is the cytoplasm. In terms of biological role, catalyzes the GTP-dependent ribosomal translocation step during translation elongation. During this step, the ribosome changes from the pre-translocational (PRE) to the post-translocational (POST) state as the newly formed A-site-bound peptidyl-tRNA and P-site-bound deacylated tRNA move to the P and E sites, respectively. Catalyzes the coordinated movement of the two tRNA molecules, the mRNA and conformational changes in the ribosome. This chain is Elongation factor G (fusA), found in Micrococcus luteus (Micrococcus lysodeikticus).